We begin with the raw amino-acid sequence, 561 residues long: Putative transport protein DNO_0009 (561 aa).

The next 5 membrane-spanning stretches (helical) occupy residues Val-4–Ile-24, Val-29–Leu-49, Phe-74–Ser-94, Ala-104–Phe-124, and Met-166–Ile-186. RCK C-terminal domains lie at Leu-198 to Glu-283 and Ala-285 to Asn-369. The next 6 helical transmembrane spans lie at Met-379 to Leu-399, Ala-411 to Phe-433, Ile-447 to Leu-467, Phe-472 to Ile-492, Tyr-501 to Ala-521, and Val-538 to Trp-558.

Belongs to the AAE transporter (TC 2.A.81) family. YidE subfamily.

It is found in the cell membrane. The protein is Putative transport protein DNO_0009 of Dichelobacter nodosus (strain VCS1703A).